Consider the following 253-residue polypeptide: PAXIP1-associated glutamate-rich protein 1A (253 aa).

Disordered stretches follow at residues 1-108 and 126-253; these read MSLA…MPPP and LQAE…QRKY. Over residues 45–66 the composition is skewed to basic and acidic residues; sequence KAEEEGKGSQEEAGREGSRPEE. The tract at residues 115–159 is sufficient for interaction with NCOA1; it reads YELLATQGTLELQAEILPRRPPTPEAQSEEERSDEEPEAKEEEEE. Thr-137 is subject to Phosphothreonine. Positions 141–158 are enriched in acidic residues; that stretch reads QSEEERSDEEPEAKEEEE. Ser-142 and Ser-147 each carry phosphoserine. The interval 160–253 is sufficient for interaction with ESR1; the sequence is KPHMPTEFDF…NSLFPRQRKY (94 aa). Basic and acidic residues predominate over residues 194-222; that stretch reads QKREARLDKVLSDMKRHKKLEEQILRTGR. Phosphoserine is present on Ser-236. A compositionally biased stretch (polar residues) spans 238–247; the sequence is PLRSSGNSLF.

As to quaternary structure, component of the KMT2 family MLL2/MLL3 complex, at least composed of the histone methyltransferases KMT2D and/or KMT2C, the common subunits ASH2L, RBBP5, WDR5 and DPY30, and the complex type-specific subunits PAXIP1/PTIP, PAGR1, NCOA6 and KDM6A; PAXIP1 is required for the association with the MLL2/MLL3 complex. Forms a constitutive complex with PAXIP1/PTIP independently of the MLL2/MLL3 complex. Interacts with NCOA1, ESR1, NR3C1, AR.

Its subcellular location is the nucleus. In terms of biological role, its association with the histone methyltransferase MLL2/MLL3 complex is suggesting a role in epigenetic transcriptional activation. However, in association with PAXIP1/PTIP is proposed to function at least in part independently of the MLL2/MLL3 complex. Proposed to be recruited by PAXIP1 to sites of DNA damage where the PAGR1:PAXIP1 complex is required for cell survival in response to DNA damage independently of the MLL2/MLL3 complex. However, its function in DNA damage has been questioned. During immunoglobulin class switching in activated B-cells is involved in transcription regulation of downstream switch regions at the immunoglobulin heavy-chain (Igh) locus independently of the MLL2/MLL3 complex. Involved in both estrogen receptor-regulated gene transcription and estrogen-stimulated G1/S cell-cycle transition. Acts as a transcriptional cofactor for nuclear hormone receptors. Inhibits the induction properties of several steroid receptors such as NR3C1, AR and PPARG; the mechanism of inhibition appears to be gene-dependent. May be involved in the regulation of the BMP pathway in extraembryonic development. The protein is PAXIP1-associated glutamate-rich protein 1A of Mus musculus (Mouse).